Here is a 215-residue protein sequence, read N- to C-terminus: uncharacterized protein (215 aa).

This is an uncharacterized protein from Archaeoglobus fulgidus (strain ATCC 49558 / DSM 4304 / JCM 9628 / NBRC 100126 / VC-16).